The following is a 166-amino-acid chain: 3-hydroxyacyl-[acyl-carrier-protein] dehydratase FabZ (166 aa).

H72 is a catalytic residue.

This sequence belongs to the thioester dehydratase family. FabZ subfamily.

The protein resides in the cytoplasm. The enzyme catalyses a (3R)-hydroxyacyl-[ACP] = a (2E)-enoyl-[ACP] + H2O. Its function is as follows. Involved in unsaturated fatty acids biosynthesis. Catalyzes the dehydration of short chain beta-hydroxyacyl-ACPs and long chain saturated and unsaturated beta-hydroxyacyl-ACPs. The polypeptide is 3-hydroxyacyl-[acyl-carrier-protein] dehydratase FabZ (Synechococcus sp. (strain JA-3-3Ab) (Cyanobacteria bacterium Yellowstone A-Prime)).